Here is a 259-residue protein sequence, read N- to C-terminus: Phosphatidylglycerol--prolipoprotein diacylglyceryl transferase (259 aa).

4 helical membrane-spanning segments follow: residues 9-29 (IIFSIGPLAVSWYSLSYVVGI), 55-75 (FITYAVIGIIVGGRLGFVLLY), 92-112 (EGGMSFHGGALGVIIAAYLFC), and 117-137 (INFLSLTDIIAPVVPIGLFLG). Residue Arg-138 participates in a 1,2-diacyl-sn-glycero-3-phospho-(1'-sn-glycerol) binding. A run of 3 helical transmembrane segments spans residues 172 to 192 (QLYEAFFEGLVLFCILAYATF), 201 to 221 (GLNSGIFLIFYALFRIAIEIF), and 228 to 248 (IGFILDSLTMGQILSVPMLLL).

This sequence belongs to the Lgt family.

The protein localises to the cell inner membrane. The catalysed reaction is L-cysteinyl-[prolipoprotein] + a 1,2-diacyl-sn-glycero-3-phospho-(1'-sn-glycerol) = an S-1,2-diacyl-sn-glyceryl-L-cysteinyl-[prolipoprotein] + sn-glycerol 1-phosphate + H(+). It participates in protein modification; lipoprotein biosynthesis (diacylglyceryl transfer). Its function is as follows. Catalyzes the transfer of the diacylglyceryl group from phosphatidylglycerol to the sulfhydryl group of the N-terminal cysteine of a prolipoprotein, the first step in the formation of mature lipoproteins. The protein is Phosphatidylglycerol--prolipoprotein diacylglyceryl transferase of Rickettsia felis (strain ATCC VR-1525 / URRWXCal2) (Rickettsia azadi).